The primary structure comprises 399 residues: Tyrosine--tRNA ligase 2 (399 aa).

The 'HIGH' region motif lies at 43–52 (PTAPDLHLGH). The 'KMSKS' region signature appears at 227–231 (KMSKS). Lys230 is a binding site for ATP. The S4 RNA-binding domain occupies 338–398 (ITLLDLCSVA…IGKRYKFRIG (61 aa)).

Belongs to the class-I aminoacyl-tRNA synthetase family. TyrS type 2 subfamily. In terms of assembly, homodimer.

It localises to the cytoplasm. The catalysed reaction is tRNA(Tyr) + L-tyrosine + ATP = L-tyrosyl-tRNA(Tyr) + AMP + diphosphate + H(+). In terms of biological role, catalyzes the attachment of tyrosine to tRNA(Tyr) in a two-step reaction: tyrosine is first activated by ATP to form Tyr-AMP and then transferred to the acceptor end of tRNA(Tyr). This is Tyrosine--tRNA ligase 2 from Photorhabdus laumondii subsp. laumondii (strain DSM 15139 / CIP 105565 / TT01) (Photorhabdus luminescens subsp. laumondii).